Here is a 395-residue protein sequence, read N- to C-terminus: Flap endonuclease 1 (395 aa).

An N-domain region spans residues 1–104 (MGIKHLFQVI…GELAKRTARK (104 aa)). Asp-34 serves as a coordination point for Mg(2+). Residues Arg-47 and Arg-70 each coordinate DNA. Positions 86, 158, 160, 179, and 181 each coordinate Mg(2+). The tract at residues 122-253 (EIEKFSRRTV…NTALKLIREH (132 aa)) is I-domain. Position 158 (Glu-158) interacts with DNA. DNA contacts are provided by Gly-231 and Asp-233. A Mg(2+)-binding site is contributed by Asp-233. The interval 341 to 349 (QQSRLEGFF) is interaction with PCNA. The segment covering 356-389 (DAEKASLKRKHDEKLQEQKKRKKEEAKAKKEAKA) has biased composition (basic and acidic residues). Residues 356–395 (DAEKASLKRKHDEKLQEQKKRKKEEAKAKKEAKAKPRGAA) are disordered.

It belongs to the XPG/RAD2 endonuclease family. FEN1 subfamily. As to quaternary structure, interacts with PCNA. Three molecules of fen1 bind to one PCNA trimer with each molecule binding to one PCNA monomer. PCNA stimulates the nuclease activity without altering cleavage specificity. The cofactor is Mg(2+). In terms of processing, phosphorylated. Phosphorylation upon DNA damage induces relocalization to the nuclear plasma.

The protein localises to the nucleus. It is found in the nucleolus. It localises to the nucleoplasm. Its subcellular location is the mitochondrion. Functionally, structure-specific nuclease with 5'-flap endonuclease and 5'-3' exonuclease activities involved in DNA replication and repair. During DNA replication, cleaves the 5'-overhanging flap structure that is generated by displacement synthesis when DNA polymerase encounters the 5'-end of a downstream Okazaki fragment. It enters the flap from the 5'-end and then tracks to cleave the flap base, leaving a nick for ligation. Also involved in the long patch base excision repair (LP-BER) pathway, by cleaving within the apurinic/apyrimidinic (AP) site-terminated flap. Acts as a genome stabilization factor that prevents flaps from equilibrating into structures that lead to duplications and deletions. Also possesses 5'-3' exonuclease activity on nicked or gapped double-stranded DNA, and exhibits RNase H activity. Also involved in replication and repair of rDNA and in repairing mitochondrial DNA. The protein is Flap endonuclease 1 (fen1) of Aspergillus clavatus (strain ATCC 1007 / CBS 513.65 / DSM 816 / NCTC 3887 / NRRL 1 / QM 1276 / 107).